The primary structure comprises 134 residues: Holo-[acyl-carrier-protein] synthase (134 aa).

2 residues coordinate Mg(2+): D8 and E56.

Belongs to the P-Pant transferase superfamily. AcpS family. Requires Mg(2+) as cofactor.

The protein resides in the cytoplasm. The enzyme catalyses apo-[ACP] + CoA = holo-[ACP] + adenosine 3',5'-bisphosphate + H(+). Its function is as follows. Transfers the 4'-phosphopantetheine moiety from coenzyme A to a Ser of acyl-carrier-protein. The sequence is that of Holo-[acyl-carrier-protein] synthase from Clostridium kluyveri (strain ATCC 8527 / DSM 555 / NBRC 12016 / NCIMB 10680 / K1).